We begin with the raw amino-acid sequence, 405 residues long: NADH-quinone oxidoreductase subunit D (405 aa).

This sequence belongs to the complex I 49 kDa subunit family. In terms of assembly, NDH-1 is composed of 14 different subunits. Subunits NuoB, C, D, E, F, and G constitute the peripheral sector of the complex.

The protein localises to the cell inner membrane. The catalysed reaction is a quinone + NADH + 5 H(+)(in) = a quinol + NAD(+) + 4 H(+)(out). NDH-1 shuttles electrons from NADH, via FMN and iron-sulfur (Fe-S) centers, to quinones in the respiratory chain. The immediate electron acceptor for the enzyme in this species is believed to be ubiquinone. Couples the redox reaction to proton translocation (for every two electrons transferred, four hydrogen ions are translocated across the cytoplasmic membrane), and thus conserves the redox energy in a proton gradient. In Leptospira borgpetersenii serovar Hardjo-bovis (strain L550), this protein is NADH-quinone oxidoreductase subunit D.